Here is a 70-residue protein sequence, read N- to C-terminus: Exodeoxyribonuclease 7 small subunit (70 aa).

It belongs to the XseB family. As to quaternary structure, heterooligomer composed of large and small subunits.

It localises to the cytoplasm. The catalysed reaction is Exonucleolytic cleavage in either 5'- to 3'- or 3'- to 5'-direction to yield nucleoside 5'-phosphates.. In terms of biological role, bidirectionally degrades single-stranded DNA into large acid-insoluble oligonucleotides, which are then degraded further into small acid-soluble oligonucleotides. This is Exodeoxyribonuclease 7 small subunit from Streptococcus pneumoniae serotype 2 (strain D39 / NCTC 7466).